A 74-amino-acid polypeptide reads, in one-letter code: DNA-directed RNA polymerase subunit omega (74 aa).

The protein belongs to the RNA polymerase subunit omega family. The RNAP catalytic core consists of 2 alpha, 1 beta, 1 beta' and 1 omega subunit. When a sigma factor is associated with the core the holoenzyme is formed, which can initiate transcription.

It catalyses the reaction RNA(n) + a ribonucleoside 5'-triphosphate = RNA(n+1) + diphosphate. Its function is as follows. Promotes RNA polymerase assembly. Latches the N- and C-terminal regions of the beta' subunit thereby facilitating its interaction with the beta and alpha subunits. This chain is DNA-directed RNA polymerase subunit omega, found in Marinomonas sp. (strain MWYL1).